The following is a 115-amino-acid chain: Non-specific lipid-transfer protein 4.2 (115 aa).

Residues 1-25 (MARAAATQLVLVAMVAAMLIVATDA) form the signal peptide. 4 disulfides stabilise this stretch: Cys29-Cys77, Cys39-Cys54, Cys55-Cys97, and Cys75-Cys111.

The protein belongs to the plant LTP family.

Its function is as follows. Plant non-specific lipid-transfer proteins transfer phospholipids as well as galactolipids across membranes. May play a role in wax or cutin deposition in the cell walls of expanding epidermal cells and certain secretory tissues. This chain is Non-specific lipid-transfer protein 4.2 (LTP4.2), found in Hordeum vulgare (Barley).